The sequence spans 114 residues: Methylamine utilization protein MauL (114 aa).

It participates in one-carbon metabolism; methylamine degradation. Its function is as follows. Probably involved in TTQ prosthetic group biosynthesis. The chain is Methylamine utilization protein MauL (mauL) from Methylorubrum extorquens (strain ATCC 14718 / DSM 1338 / JCM 2805 / NCIMB 9133 / AM1) (Methylobacterium extorquens).